The primary structure comprises 196 residues: ATP-dependent Clp protease proteolytic subunit (196 aa).

Residue serine 101 is the Nucleophile of the active site. The active site involves histidine 126.

This sequence belongs to the peptidase S14 family. As to quaternary structure, component of the chloroplastic Clp protease core complex.

It is found in the plastid. The protein localises to the chloroplast stroma. The enzyme catalyses Hydrolysis of proteins to small peptides in the presence of ATP and magnesium. alpha-casein is the usual test substrate. In the absence of ATP, only oligopeptides shorter than five residues are hydrolyzed (such as succinyl-Leu-Tyr-|-NHMec, and Leu-Tyr-Leu-|-Tyr-Trp, in which cleavage of the -Tyr-|-Leu- and -Tyr-|-Trp bonds also occurs).. Cleaves peptides in various proteins in a process that requires ATP hydrolysis. Has a chymotrypsin-like activity. Plays a major role in the degradation of misfolded proteins. The protein is ATP-dependent Clp protease proteolytic subunit of Gossypium barbadense (Sea Island cotton).